The primary structure comprises 371 residues: MAIDEQIPRVQRALIQSSTPGVLQFTETREVPKLLPDQVLVRVVAVALNPCDWKMPTNFPCPGAGVGADFSGTVVRVGDDVRPGKFDVKLGDRVAGAVHASNRLKPQDGTFAEYIAVRADALWRIPDGMDFHVAAAIGLCVVGTVGLAAFHERHLNLPGSPEQPVKPRAGGQPPWVLVYGGSTASGTMAIQILKLAGFRVVTTCSPANFALVESYGADKAFDYHSPNLGESIRAYTNNSLSFVMDIIASANSLRQCYASIGRAGGHYVGFELVPDELAGIRKAVRASWVLGIRLLGYEIALDRGYGSPPDPELGMWGRAWFKRTEDLVWGGKIRPHPIELDTESGFDGIVAGVERLKRGEVSGKKLVYLIR.

Residue 51–54 (CDWK) coordinates NADP(+). 140-147 (CVVGTVGL) serves as a coordination point for substrate. NADP(+)-binding positions include 182 to 185 (STAS), 205 to 208 (SPAN), Y223, and 270 to 271 (FE). 291–295 (GIRLL) is a substrate binding site. 361–362 (VS) is an NADP(+) binding site.

Belongs to the zinc-containing alcohol dehydrogenase family. Monomer.

It catalyses the reaction L-leucine + 8 malonyl-CoA + 4 S-adenosyl-L-methionine + ATP + 9 NADPH + 12 H(+) = (5S)-5-(2-methylpropyl)-3-[(2E,6R,8E,10E,12E)-6,8,10,12-tetramethyltetradeca-2,8,10,12-tetraenoyl]-2,5-dihydro-1H-pyrrol-2-one + AMP + 4 S-adenosyl-L-homocysteine + 8 CO2 + diphosphate + 9 NADP(+) + 8 CoA + 7 H2O. Its pathway is mycotoxin biosynthesis. In terms of biological role, trans-enoyl reductase; part of the gene cluster that mediates the biosynthesis of myceliothermophins, mycotoxins that contain a trans-fused decalin ring system connected to a conjugated 3-pyrrolin-2-one moiety and that have potential anti-tumor properties. The polyketide synthase module (PKS) of the PKS-NRPS mycA is responsible for the synthesis of the octaketide backbone. The downstream nonribosomal peptide synthetase (NRPS) module then amidates the carboxyl end of the octaketide with a leucine. A reductase-like domain (R) at the C-terminus catalyzes the reductive release of the polyketide-amino acid intermediate. Because mycA lacks a designated enoylreductase (ER) domain, the required activity is provided the enoyl reductase mycC. Following mycA-catalyzed construction and release of aminoacyl polyketide aldehyde, Knoevenagel condensation yields the expected ketone. This C18 keto acyclic precursor is the substrate of the Diels-Alderase mycB, that catalyzes the Diels-Alder cycloaddition to produce myceliothermophin E. A yet unknown oxygenase involved in the production of myceliothermophin A, via substitution with a hydroxyl group at the C21, has still to be identified. This chain is Trans-enoyl reductase mycC, found in Thermothelomyces thermophilus (strain ATCC 42464 / BCRC 31852 / DSM 1799) (Sporotrichum thermophile).